The following is a 120-amino-acid chain: Chaperonin GroEL (120 aa).

23 to 27 contributes to the ATP binding site; it reads DGTTT.

The protein belongs to the chaperonin (HSP60) family. In terms of assembly, forms a cylinder of 14 subunits composed of two heptameric rings stacked back-to-back. Interacts with the co-chaperonin GroES.

The protein resides in the cytoplasm. It catalyses the reaction ATP + H2O + a folded polypeptide = ADP + phosphate + an unfolded polypeptide.. Its function is as follows. Together with its co-chaperonin GroES, plays an essential role in assisting protein folding. The GroEL-GroES system forms a nano-cage that allows encapsulation of the non-native substrate proteins and provides a physical environment optimized to promote and accelerate protein folding. This chain is Chaperonin GroEL, found in Mycobacterium xenopi.